A 202-amino-acid chain; its full sequence is Small ribosomal subunit protein uS4 (202 aa).

Residues 18–44 form a disordered region; sequence LPGLTRKSARREYPPGQHGQGRRKRSE. The S4 RNA-binding domain occupies 90-152; sequence MRLDNTVFRL…DRSRKLIEAN (63 aa).

It belongs to the universal ribosomal protein uS4 family. As to quaternary structure, part of the 30S ribosomal subunit. Contacts protein S5. The interaction surface between S4 and S5 is involved in control of translational fidelity.

Functionally, one of the primary rRNA binding proteins, it binds directly to 16S rRNA where it nucleates assembly of the body of the 30S subunit. With S5 and S12 plays an important role in translational accuracy. This Picosynechococcus sp. (strain ATCC 27264 / PCC 7002 / PR-6) (Agmenellum quadruplicatum) protein is Small ribosomal subunit protein uS4.